Here is a 408-residue protein sequence, read N- to C-terminus: GTPase Obg (408 aa).

The Obg domain occupies methionine 1–leucine 159. The segment at asparagine 127–arginine 150 is disordered. The segment covering arginine 129–proline 143 has biased composition (polar residues). The OBG-type G domain maps to alanine 160–glutamate 333. GTP is bound by residues glycine 166–serine 173, phenylalanine 191–valine 195, aspartate 213–glycine 216, asparagine 283–aspartate 286, and serine 314–isoleucine 316. Residues serine 173 and threonine 193 each contribute to the Mg(2+) site. The tract at residues histidine 382–aspartate 408 is disordered. The span at glycine 385–proline 401 shows a compositional bias: acidic residues.

The protein belongs to the TRAFAC class OBG-HflX-like GTPase superfamily. OBG GTPase family. Monomer. The cofactor is Mg(2+).

The protein localises to the cytoplasm. An essential GTPase which binds GTP, GDP and possibly (p)ppGpp with moderate affinity, with high nucleotide exchange rates and a fairly low GTP hydrolysis rate. Plays a role in control of the cell cycle, stress response, ribosome biogenesis and in those bacteria that undergo differentiation, in morphogenesis control. In Pseudomonas putida (strain GB-1), this protein is GTPase Obg.